Here is a 239-residue protein sequence, read N- to C-terminus: Pyridoxine 5'-phosphate synthase (239 aa).

Asn-7 contributes to the 3-amino-2-oxopropyl phosphate binding site. Position 9-10 (Asp-9–His-10) interacts with 1-deoxy-D-xylulose 5-phosphate. Arg-18 is a 3-amino-2-oxopropyl phosphate binding site. His-43 functions as the Proton acceptor in the catalytic mechanism. 2 residues coordinate 1-deoxy-D-xylulose 5-phosphate: Arg-45 and His-50. Glu-70 functions as the Proton acceptor in the catalytic mechanism. Thr-100 serves as a coordination point for 1-deoxy-D-xylulose 5-phosphate. Residue His-191 is the Proton donor of the active site. 3-amino-2-oxopropyl phosphate-binding positions include Gly-192 and Gly-213–His-214.

It belongs to the PNP synthase family. As to quaternary structure, homooctamer; tetramer of dimers.

It is found in the cytoplasm. The catalysed reaction is 3-amino-2-oxopropyl phosphate + 1-deoxy-D-xylulose 5-phosphate = pyridoxine 5'-phosphate + phosphate + 2 H2O + H(+). It participates in cofactor biosynthesis; pyridoxine 5'-phosphate biosynthesis; pyridoxine 5'-phosphate from D-erythrose 4-phosphate: step 5/5. Functionally, catalyzes the complicated ring closure reaction between the two acyclic compounds 1-deoxy-D-xylulose-5-phosphate (DXP) and 3-amino-2-oxopropyl phosphate (1-amino-acetone-3-phosphate or AAP) to form pyridoxine 5'-phosphate (PNP) and inorganic phosphate. The sequence is that of Pyridoxine 5'-phosphate synthase from Geobacter sulfurreducens (strain ATCC 51573 / DSM 12127 / PCA).